We begin with the raw amino-acid sequence, 222 residues long: Cytidylate kinase (222 aa).

An ATP-binding site is contributed by 7–15; the sequence is GPSASGKSS.

The protein belongs to the cytidylate kinase family. Type 1 subfamily.

It is found in the cytoplasm. The enzyme catalyses CMP + ATP = CDP + ADP. It carries out the reaction dCMP + ATP = dCDP + ADP. The polypeptide is Cytidylate kinase (Borrelia turicatae (strain 91E135)).